A 61-amino-acid chain; its full sequence is Small ribosomal subunit protein uS14B (61 aa).

Residues C24, C27, C40, and C43 each contribute to the Zn(2+) site.

This sequence belongs to the universal ribosomal protein uS14 family. Zinc-binding uS14 subfamily. As to quaternary structure, part of the 30S ribosomal subunit. Contacts proteins S3 and S10. Requires Zn(2+) as cofactor.

In terms of biological role, binds 16S rRNA, required for the assembly of 30S particles and may also be responsible for determining the conformation of the 16S rRNA at the A site. This Oceanobacillus iheyensis (strain DSM 14371 / CIP 107618 / JCM 11309 / KCTC 3954 / HTE831) protein is Small ribosomal subunit protein uS14B.